A 142-amino-acid chain; its full sequence is Small heat shock protein IbpB (142 aa).

In terms of domain architecture, sHSP spans 26 to 137 (TAEHQAFPPY…APQRIAISDR (112 aa)).

This sequence belongs to the small heat shock protein (HSP20) family. As to quaternary structure, homodimer. Forms homomultimers of about 100-150 subunits at optimal growth temperatures. Conformation changes to oligomers at high temperatures or high ionic concentrations. The decrease in size of the multimers is accompanied by an increase in chaperone activity.

The protein resides in the cytoplasm. Functionally, associates with aggregated proteins, together with IbpA, to stabilize and protect them from irreversible denaturation and extensive proteolysis during heat shock and oxidative stress. Aggregated proteins bound to the IbpAB complex are more efficiently refolded and reactivated by the ATP-dependent chaperone systems ClpB and DnaK/DnaJ/GrpE. Its activity is ATP-independent. The sequence is that of Small heat shock protein IbpB from Enterobacter sp. (strain 638).